Here is a 657-residue protein sequence, read N- to C-terminus: Probable potassium transport system protein Kup (657 aa).

Helical transmembrane passes span 15–35 (SFLI…LYVM), 48–68 (ITPD…TLLT), 100–120 (WLII…MLTP), 147–167 (IIII…HFGT), 173–193 (IFGP…IVNL), 219–239 (LGFF…ALYS), 251–271 (LTWP…AAWI), 292–312 (MMPS…AIIA), 348–368 (IYMP…VLYF), 378–398 (YGLS…NYLL), 403–423 (PLPI…SFLI), and 431–451 (KGGF…YIWI).

This sequence belongs to the HAK/KUP transporter (TC 2.A.72) family.

The protein resides in the cell membrane. It catalyses the reaction K(+)(in) + H(+)(in) = K(+)(out) + H(+)(out). Functionally, transport of potassium into the cell. Likely operates as a K(+):H(+) symporter. This Clostridium perfringens (strain SM101 / Type A) protein is Probable potassium transport system protein Kup.